The primary structure comprises 111 residues: Small ribosomal subunit protein bS16 (111 aa).

Belongs to the bacterial ribosomal protein bS16 family.

The polypeptide is Small ribosomal subunit protein bS16 (Rickettsia africae (strain ESF-5)).